A 127-amino-acid polypeptide reads, in one-letter code: MTQSVPPGDIQTQPGTKIVFNAPYDDKHTYHIKVINSSARRIGYGIKTTNMKRLGVDPPCGVLDPKEAVLLAVSCDAFAFGQEDTNNDRITVEWTNTPDGAAKQFRREWFQGDGMVRRKNLPIEYNP.

Thr-2 is subject to N-acetylthreonine. One can recognise an MSP domain in the interval 9–126 (DIQTQPGTKI…RRKNLPIEYN (118 aa)).

As to expression, sperm.

It is found in the cell projection. Its subcellular location is the pseudopodium. The protein resides in the cytoplasm. It localises to the cytoskeleton. Central component in molecular interactions underlying sperm crawling. Forms an extensive filament system that extends from sperm villipoda, along the leading edge of the pseudopod. The protein is Major sperm protein 152 (msp-152) of Caenorhabditis elegans.